Reading from the N-terminus, the 167-residue chain is uncharacterized protein (167 aa).

This is an uncharacterized protein from Mycobacterium tuberculosis (strain CDC 1551 / Oshkosh).